We begin with the raw amino-acid sequence, 152 residues long: Cell division protein SepF (152 aa).

Over residues 23–32 (EVAREPEPMQ) the composition is skewed to basic and acidic residues. A disordered region spans residues 23 to 42 (EVAREPEPMQKKTKKEKPSK).

The protein belongs to the SepF family. In terms of assembly, homodimer. Interacts with FtsZ.

The protein resides in the cytoplasm. In terms of biological role, cell division protein that is part of the divisome complex and is recruited early to the Z-ring. Probably stimulates Z-ring formation, perhaps through the cross-linking of FtsZ protofilaments. Its function overlaps with FtsA. This chain is Cell division protein SepF, found in Listeria innocua serovar 6a (strain ATCC BAA-680 / CLIP 11262).